We begin with the raw amino-acid sequence, 350 residues long: MSQIDQLLLSIASNKLAYYALLFSLLFGVFKLTTFTLRFASLIVDLFILPAVDFSKYGANRGNWAVVTGASDGIGKEYALQLAKRGLSIVLVSRTQSKLELLATEISSKYKVNTKIVAFDASKDDEENYLELEKAIYDLPITVLINNVGQSHSIPVPFLETEQKELRDIITINNTATLRITQVVAPAIVATVEKSQKKVRGLILTMGSFGGLLPTPYLATYSGSKAFLQAWSAALAGELNPKGVDVELVISYLVTSAMSKIRRSSLTIPNPKQFVASTLASVGRRNGAQERFATNTPYWAHAIMHFAIENTVGVYSKIANTLNFNMHKSIRTRALKKQEKRSRLAAEKIE.

The helical transmembrane segment at 20 to 40 threads the bilayer; sequence ALLFSLLFGVFKLTTFTLRFA. 7 residues coordinate NADP(+): V66, D120, N147, Y221, K225, V254, and S256. The Proton donor role is filled by Y221. K225 serves as the catalytic Lowers pKa of active site Tyr.

This sequence belongs to the short-chain dehydrogenases/reductases (SDR) family.

It is found in the endoplasmic reticulum membrane. The enzyme catalyses a very-long-chain (3R)-3-hydroxyacyl-CoA + NADP(+) = a very-long-chain 3-oxoacyl-CoA + NADPH + H(+). Its pathway is lipid metabolism; fatty acid biosynthesis. Its function is as follows. Component of the microsomal membrane bound fatty acid elongation system, which produces the 26-carbon very long-chain fatty acids (VLCFA) from palmitate. Catalyzes the reduction of the 3-ketoacyl-CoA intermediate that is formed in each cycle of fatty acid elongation. VLCFAs serve as precursors for ceramide and sphingolipids. This is Very-long-chain 3-oxoacyl-CoA reductase from Lodderomyces elongisporus (strain ATCC 11503 / CBS 2605 / JCM 1781 / NBRC 1676 / NRRL YB-4239) (Yeast).